A 117-amino-acid chain; its full sequence is MDKKSARLRRAARTRHQIRHNGVHRLCVHRTPRHIYAQVIAPNGSEVVAAASTVEVELAKDLKGTGNVDAAVAIGKVIAERAKAKGVSEVAFDRSGFKYHGRVKALADAAREGGLQF.

It belongs to the universal ribosomal protein uL18 family. As to quaternary structure, part of the 50S ribosomal subunit; part of the 5S rRNA/L5/L18/L25 subcomplex. Contacts the 5S and 23S rRNAs.

Its function is as follows. This is one of the proteins that bind and probably mediate the attachment of the 5S RNA into the large ribosomal subunit, where it forms part of the central protuberance. The sequence is that of Large ribosomal subunit protein uL18 from Thioalkalivibrio sulfidiphilus (strain HL-EbGR7).